A 425-amino-acid polypeptide reads, in one-letter code: Enolase (425 aa).

Residues 31–54 are disordered; it reads TGSAIVPSGASTGEKEAVELRDSD. The span at 43–54 shows a compositional bias: basic and acidic residues; sequence GEKEAVELRDSD. Q162 is a (2R)-2-phosphoglycerate binding site. Catalysis depends on E204, which acts as the Proton donor. Mg(2+) contacts are provided by D241, E285, and D312. K337, R366, S367, and K388 together coordinate (2R)-2-phosphoglycerate. K337 functions as the Proton acceptor in the catalytic mechanism.

It belongs to the enolase family. The cofactor is Mg(2+).

It localises to the cytoplasm. It is found in the secreted. The protein localises to the cell surface. It catalyses the reaction (2R)-2-phosphoglycerate = phosphoenolpyruvate + H2O. It functions in the pathway carbohydrate degradation; glycolysis; pyruvate from D-glyceraldehyde 3-phosphate: step 4/5. Functionally, catalyzes the reversible conversion of 2-phosphoglycerate (2-PG) into phosphoenolpyruvate (PEP). It is essential for the degradation of carbohydrates via glycolysis. In Gloeobacter violaceus (strain ATCC 29082 / PCC 7421), this protein is Enolase.